The primary structure comprises 240 residues: MTSLPCPLPDRGASNVVFPDLAPALSVVAAYPLGLSPGTAASPDLSYSQSYGHPRSYSHPGPATPGDSYLPRQQQLVAPSQPFHRPAEHPQELEAESEKLALSLVPSQQQSLTRKLRKPRTIYSSLQLQHLNQRFQHTQYLALPERAQLAAQLGLTQTQVKIWFQNKRSKYKKLLKQSSGEPEEDFSGRPPSLSPHSPALPFIWGLPKADTLPSSGYDNSHFGAWYQHRSPDVLALPQMM.

Disordered regions lie at residues 44–70 and 175–194; these read DLSY…DSYL and LKQS…PSLS. Residues 116-175 constitute a DNA-binding region (homeobox); sequence LRKPRTIYSSLQLQHLNQRFQHTQYLALPERAQLAAQLGLTQTQVKIWFQNKRSKYKKLL.

It belongs to the distal-less homeobox family. Branchial arches, molar and incisor teeth and limbs.

It is found in the nucleus. Functionally, may play a role in determining the production of hemoglobin S. May act as a repressor. During embryonic development, plays a role in palatogenesis. This is Homeobox protein DLX-4 (Dlx4) from Mus musculus (Mouse).